Here is a 430-residue protein sequence, read N- to C-terminus: Serine--tRNA ligase (430 aa).

Position 236-238 (236-238) interacts with L-serine; it reads TAE. An ATP-binding site is contributed by 267-269; it reads RSE. Glutamate 290 contacts L-serine. 354–357 is an ATP binding site; sequence EISS. Serine 390 lines the L-serine pocket.

Belongs to the class-II aminoacyl-tRNA synthetase family. Type-1 seryl-tRNA synthetase subfamily. As to quaternary structure, homodimer. The tRNA molecule binds across the dimer.

It localises to the cytoplasm. It carries out the reaction tRNA(Ser) + L-serine + ATP = L-seryl-tRNA(Ser) + AMP + diphosphate + H(+). The catalysed reaction is tRNA(Sec) + L-serine + ATP = L-seryl-tRNA(Sec) + AMP + diphosphate + H(+). Its pathway is aminoacyl-tRNA biosynthesis; selenocysteinyl-tRNA(Sec) biosynthesis; L-seryl-tRNA(Sec) from L-serine and tRNA(Sec): step 1/1. Catalyzes the attachment of serine to tRNA(Ser). Is also able to aminoacylate tRNA(Sec) with serine, to form the misacylated tRNA L-seryl-tRNA(Sec), which will be further converted into selenocysteinyl-tRNA(Sec). This Mannheimia succiniciproducens (strain KCTC 0769BP / MBEL55E) protein is Serine--tRNA ligase.